A 357-amino-acid polypeptide reads, in one-letter code: Fructose-1,6-bisphosphatase class 1 2 (357 aa).

Mg(2+) is bound by residues glutamate 90, aspartate 112, leucine 114, and aspartate 115. Residues 115–118 (DGSS) and asparagine 206 contribute to the substrate site. A Mg(2+)-binding site is contributed by glutamate 278.

This sequence belongs to the FBPase class 1 family. In terms of assembly, homotetramer. Mg(2+) is required as a cofactor.

The protein localises to the cytoplasm. The catalysed reaction is beta-D-fructose 1,6-bisphosphate + H2O = beta-D-fructose 6-phosphate + phosphate. It functions in the pathway carbohydrate biosynthesis; gluconeogenesis. The protein is Fructose-1,6-bisphosphatase class 1 2 of Dechloromonas aromatica (strain RCB).